The primary structure comprises 358 residues: MLDKIRFTVLLDRPFYQPGQTIQGHVVCEPHHPLEIDCVEGRLHGEIQYFQQLPPNHNRNGSPLPPSKTRVLIDEKAQLWKYQTVSEMLGLDVFYDENQNRHFSSESASASSSSLFTTAATFPIQIELPHFAPPSFYCPGSPVSIRFTLEIQLYNQGFKIASHEENLVVLNYESIKRQVTPKPVNFQKTFNFPKERSISLEMLLPTDVFTTTARLENCITICNRWKQSLKYVHLNIVRRISALNQNNEVIDTVKIDTTGVGLPSKTKIAVGETYSFRPTFNVPALPPNIHVNGLFKTEYSLKVTIGRAHNFVLASYEVPITIVTMDQSSRRSMQKEDILVDISASNNTLNNLPVDLLA.

Belongs to the arrestin family.

In terms of biological role, involved in resistance to B.thuringiensis pore-forming toxin Cry5B downstream of the sek-1 and pmk-1 MAPK kinase pathway. The polypeptide is Protein ttm-2 (Caenorhabditis elegans).